The chain runs to 121 residues: Secretin (121 aa).

An N-terminal signal peptide occupies residues 1–18 (MAPRPLLLLLLLLGGSAA). Positions 19 to 26 (RPAPPRAR) are excised as a propeptide. Val-54 is modified (valine amide). Position 58 is a phosphoserine (Ser-58). Positions 58–121 (SEQDAENSMA…AAAEGTLRPR (64 aa)) are excised as a propeptide.

The protein belongs to the glucagon family.

The protein localises to the secreted. Functionally, hormone involved in different processes, such as regulation of the pH of the duodenal content, food intake and water homeostasis. Exerts its biological effects by binding to secretin receptor (SCTR), a G-protein coupled receptor expressed in the basolateral domain of several cells. Acts as a key gastrointestinal hormone by regulating the pH of the duodenal content. Secreted by S cells of the duodenum in the crypts of Lieberkuehn and regulates the pH of the duodenum by (1) inhibiting the secretion of gastric acid from the parietal cells of the stomach and (2) stimulating the production of bicarbonate (NaHCO(3)) from the ductal cells of the pancreas. Production of bicarbonate is essential to neutralize the pH and ensure no damage is done to the small intestine by the gastric acid. In addition to regulating the pH of the duodenal content, plays a central role in diet induced thermogenesis: acts as a non-sympathetic brown fat (BAT) activator mediating prandial thermogenesis, which consequentially induces satiation. Mechanistically, secretin released by the gut after a meal binds to secretin receptor (SCTR) in brown adipocytes, activating brown fat thermogenesis by stimulating lipolysis, which is sensed in the brain and promotes satiation. Also able to stimulate lipolysis in white adipocytes. Also plays an important role in cellular osmoregulation: released into the systemic circulation in response to hyperosmolality and acts at different levels in the hypothalamus, pituitary and kidney to regulate water homeostasis. Also plays a role in the central nervous system, possibly by acting as a neuropeptide hormone: required for hippocampal synaptic function and neural progenitor cells maintenance. The protein is Secretin of Homo sapiens (Human).